We begin with the raw amino-acid sequence, 1217 residues long: DNA-directed RNA polymerase subunit beta' (1217 aa).

Zn(2+)-binding residues include cysteine 60, cysteine 62, cysteine 75, and cysteine 78. Residues aspartate 449, aspartate 451, and aspartate 453 each contribute to the Mg(2+) site. Zn(2+) contacts are provided by cysteine 821, cysteine 895, cysteine 902, and cysteine 905.

It belongs to the RNA polymerase beta' chain family. As to quaternary structure, the RNAP catalytic core consists of 2 alpha, 1 beta, 1 beta' and 1 omega subunit. When a sigma factor is associated with the core the holoenzyme is formed, which can initiate transcription. Mg(2+) is required as a cofactor. It depends on Zn(2+) as a cofactor.

It carries out the reaction RNA(n) + a ribonucleoside 5'-triphosphate = RNA(n+1) + diphosphate. DNA-dependent RNA polymerase catalyzes the transcription of DNA into RNA using the four ribonucleoside triphosphates as substrates. This Lactobacillus helveticus (strain DPC 4571) protein is DNA-directed RNA polymerase subunit beta'.